Reading from the N-terminus, the 863-residue chain is MQELTPMMQQYMEIKQKVKDCILFFRLGDFYEMFFEDAIVASKELEIALTSRDCGNNEKAPMCGVPYHSATSYIAKLIEKGYKVAICEQVEDPKLAKGIVKREITRIITPGTFIDDNISTANNFICCISKDRSEFALTFVDVSTGEMYSCLLEEDLQKLVNEIGKYSPSEILISNIEDELYEFLKKNCTSFVQMIEFVDLQKCHEIIENQINVGKIDEKLILSVGNLLKYLTETQKISFDYIRRFEFYRVQNYLQIDINTKRNLELTESIIQRSRKNSLLGILDQTKTSMGSRLLKKWIERPLIDIIEINKRLDSVEELKSNYSTLVQVEELLSRMYDIERLSSKFAYKNVNAKDLLSLKKSIEVLPTLKQFLSSFDSELLKEIYEGLDTLEDIYALIDSSINEDAPVSLKEGGIIKEGFNEEVDRLRNISKNSKELLVEYEEKERNLTGIKNLRIGYNKVFGYYIEVTKSNYSLVPDRYIRKQTLANAERYITEELKKLEDEILGADQKLIELEYQLFCEIRDRIEAQIERIQKTASNIANLDVLCSFARIAIDNEYVRPNVYLGDRIYIKNGRHPVVEKMIGRGNFIPNDTELDQAENRVLIITGPNMAGKSTYMRQVALIVIMAQMGCFVPADEAHIGVVDKIFSRIGASDDISSGQSTFMVEMSEVANILKNATPKSLIIFDEVGRGTSTYDGLSIAWAVLEYVADKSKIGAKTLFATHYHELTELEERIPGVKNYRVDVKEEGKNIIFLRKIVRGGCDSSYGIHVARLAGIPEEVLKRAEEILKQLEEADINRKNIRKLRREIKKEFTEQIDFFSYKKEEIIDKIEKLDILNITPIQALNILSELKHEIIKAKERQLI.

607-614 contributes to the ATP binding site; sequence GPNMAGKS.

This sequence belongs to the DNA mismatch repair MutS family.

This protein is involved in the repair of mismatches in DNA. It is possible that it carries out the mismatch recognition step. This protein has a weak ATPase activity. The polypeptide is DNA mismatch repair protein MutS (Caldicellulosiruptor bescii (strain ATCC BAA-1888 / DSM 6725 / KCTC 15123 / Z-1320) (Anaerocellum thermophilum)).